A 231-amino-acid polypeptide reads, in one-letter code: Class A basic helix-loop-helix protein 9 (231 aa).

In terms of domain architecture, bHLH spans 61-113 (ARRMAANVRERKRILDYNEAFNALRRALQHDLGGKRLSKIATLRRAIHRITAL). The interval 135-168 (QAAQGSSTGNSSFSVPRSAPSPIAPSLTRRDIAS) is disordered. Positions 137 to 149 (AQGSSTGNSSFSV) are enriched in polar residues.

As to quaternary structure, heterodimer. Efficient DNA binding requires dimerization with another bHLH protein. Interacts with TCF3, TCF4, and TCF12.

The protein localises to the nucleus. Its function is as follows. Transcription factor, which play a role in limb development. Is an essential player in the regulatory network governing transcription of genes implicated in limb morphogenesis. This Mus musculus (Mouse) protein is Class A basic helix-loop-helix protein 9 (Bhlha9).